Here is a 138-residue protein sequence, read N- to C-terminus: Histone H2B.8 (138 aa).

Positions 1–38 (MAPKAAEKKPAGKKPAEKAPAEKLPKAEKKITKEGGSE) are enriched in basic and acidic residues. The interval 1–45 (MAPKAAEKKPAGKKPAEKAPAEKLPKAEKKITKEGGSEKKKKKSK) is disordered. Residue Ala2 is modified to N,N,N-trimethylalanine; alternate. At Ala2 the chain carries N,N-dimethylalanine; alternate. Ala2 carries the N-methylalanine; alternate modification. At Lys4 the chain carries N6-methyllysine. Residues Lys8 and Lys13 each carry the N6-acetyllysine modification. An N6,N6-dimethyllysine modification is found at Lys14. Residues Lys18, Lys23, Lys29, and Lys30 each carry the N6-acetyllysine modification. Lys134 is covalently cross-linked (Glycyl lysine isopeptide (Lys-Gly) (interchain with G-Cter in ubiquitin)).

The protein belongs to the histone H2B family. As to quaternary structure, the nucleosome is a histone octamer containing two molecules each of H2A, H2B, H3 and H4 assembled in one H3-H4 heterotetramer and two H2A-H2B heterodimers. The octamer wraps approximately 147 bp of DNA. Post-translationally, can be acetylated to form H2BK6ac, H2BK33ac and H2BK34ac. In terms of processing, monoubiquitinated by BRE1 to form H2BK143ub1 and deubiquitinated by UBP26. Required for heterochromatic histone H3 di- and trimethylation at H3K4me. May give a specific tag for epigenetic transcriptional activation.

It localises to the nucleus. The protein resides in the chromosome. Functionally, core component of nucleosome. Nucleosomes wrap and compact DNA into chromatin, limiting DNA accessibility to the cellular machineries which require DNA as a template. Histones thereby play a central role in transcription regulation, DNA repair, DNA replication and chromosomal stability. DNA accessibility is regulated via a complex set of post-translational modifications of histones, also called histone code, and nucleosome remodeling. This chain is Histone H2B.8, found in Arabidopsis thaliana (Mouse-ear cress).